We begin with the raw amino-acid sequence, 439 residues long: Xylose isomerase (439 aa).

Catalysis depends on residues histidine 101 and aspartate 104. Positions 232, 268, 271, 296, 307, 309, and 339 each coordinate Mg(2+).

Belongs to the xylose isomerase family. Homotetramer. Mg(2+) serves as cofactor.

The protein localises to the cytoplasm. The enzyme catalyses alpha-D-xylose = alpha-D-xylulofuranose. The sequence is that of Xylose isomerase from Histophilus somni (strain 2336) (Haemophilus somnus).